The sequence spans 638 residues: Threonine--tRNA ligase (638 aa).

A TGS domain is found at 1–61 (MPNITLPDGS…EADTPLAIVT (61 aa)). Residues 242–533 (DHRKLGRLLD…LIEHYAGALP (292 aa)) are catalytic. Zn(2+) contacts are provided by Cys333, His384, and His510.

It belongs to the class-II aminoacyl-tRNA synthetase family. As to quaternary structure, homodimer. Zn(2+) serves as cofactor.

It is found in the cytoplasm. The enzyme catalyses tRNA(Thr) + L-threonine + ATP = L-threonyl-tRNA(Thr) + AMP + diphosphate + H(+). Its function is as follows. Catalyzes the attachment of threonine to tRNA(Thr) in a two-step reaction: L-threonine is first activated by ATP to form Thr-AMP and then transferred to the acceptor end of tRNA(Thr). Also edits incorrectly charged L-seryl-tRNA(Thr). This is Threonine--tRNA ligase from Aromatoleum aromaticum (strain DSM 19018 / LMG 30748 / EbN1) (Azoarcus sp. (strain EbN1)).